Reading from the N-terminus, the 420-residue chain is Putative zinc metalloprotease Lmo1318 (420 aa).

H18 contributes to the Zn(2+) binding site. Residue E19 is part of the active site. H22 contributes to the Zn(2+) binding site. 4 helical membrane passes run 172-194, 304-326, 347-369, and 393-412; these read TIFA…LAFV, NWIV…LDML, VLNW…LPAL, and GIIH…LVTW. One can recognise a PDZ domain in the interval 176–267; it reads GPLFNFILAI…DGKTQDIDVK (92 aa).

It belongs to the peptidase M50B family. Zn(2+) serves as cofactor.

It localises to the cell membrane. This Listeria monocytogenes serovar 1/2a (strain ATCC BAA-679 / EGD-e) protein is Putative zinc metalloprotease Lmo1318.